The sequence spans 141 residues: Large ribosomal subunit protein uL11 (141 aa).

Belongs to the universal ribosomal protein uL11 family. Part of the ribosomal stalk of the 50S ribosomal subunit. Interacts with L10 and the large rRNA to form the base of the stalk. L10 forms an elongated spine to which L12 dimers bind in a sequential fashion forming a multimeric L10(L12)X complex. Post-translationally, one or more lysine residues are methylated.

In terms of biological role, forms part of the ribosomal stalk which helps the ribosome interact with GTP-bound translation factors. The polypeptide is Large ribosomal subunit protein uL11 (Lactococcus lactis subsp. cremoris (strain MG1363)).